Reading from the N-terminus, the 209-residue chain is Max dimerization protein 4 (209 aa).

The tract at residues 6 to 23 (LLLLLEAAEYLERRDREA) is interaction with SIN3A and SIN3B. Residues 53–105 (NNRSSHNELEKHRRAKLRLYLEQLKQLGPLGPDSTRHTTLSLLKRAKMHIKKL) form the bHLH domain. A disordered region spans residues 137–209 (SVERVRTDST…CRRPGCPGLS (73 aa)). Residues 153–163 (DDSEQEVDIEG) are compositionally biased toward acidic residues. Polar residues predominate over residues 185–195 (SLQSSGCSDSS).

Efficient DNA binding requires dimerization with another bHLH protein. Binds DNA as a heterodimer with MAX. Interacts with SIN3A AND SIN3B. Interacts with RNF17.

Its subcellular location is the nucleus. Its function is as follows. Transcriptional repressor. Binds with MAX to form a sequence-specific DNA-binding protein complex which recognizes the core sequence 5'-CAC[GA]TG-3'. Antagonizes MYC transcriptional activity by competing for MAX and suppresses MYC dependent cell transformation. This is Max dimerization protein 4 (Mxd4) from Mus musculus (Mouse).